A 134-amino-acid chain; its full sequence is MNQRLQRLADQIQRELAVLIRDAVNDPRLTGFVTISSVKVSPDLGYADVYVTIMEPELNDAMTMSNHEESIKVLNKAAGFLRTELSHSLKTRTTPRLRFHYDEVTARGNYMMDLISKAVIKTEENESDEQENEE.

The protein belongs to the RbfA family. As to quaternary structure, monomer. Binds 30S ribosomal subunits, but not 50S ribosomal subunits or 70S ribosomes.

The protein resides in the cytoplasm. Functionally, one of several proteins that assist in the late maturation steps of the functional core of the 30S ribosomal subunit. Associates with free 30S ribosomal subunits (but not with 30S subunits that are part of 70S ribosomes or polysomes). Required for efficient processing of 16S rRNA. May interact with the 5'-terminal helix region of 16S rRNA. The protein is Ribosome-binding factor A of Psychrobacter arcticus (strain DSM 17307 / VKM B-2377 / 273-4).